The following is a 622-amino-acid chain: Probable ATP-dependent RNA helicase DDX41 (622 aa).

Positions 1-15 (MEESEPERKRARTDE) are enriched in basic and acidic residues. 2 disordered regions span residues 1–39 (MEES…YVPL) and 52–84 (QRRR…PQSN). Serine 4 is modified (phosphoserine). At lysine 9 the chain carries N6-acetyllysine. Residue lysine 9 forms a Glycyl lysine isopeptide (Lys-Gly) (interchain with G-Cter in ubiquitin) linkage. 2 positions are modified to phosphoserine: serine 21 and serine 23. Tyrosine 33 is subject to Phosphotyrosine. Lysine 115 participates in a covalent cross-link: Glycyl lysine isopeptide (Lys-Gly) (interchain with G-Cter in ubiquitin). Positions 181 to 209 (KSFKEMKFPAAILRGLKKKGIHHPTPIQI) match the Q motif motif. The Helicase ATP-binding domain maps to 212-396 (IPTILSGRDM…KSALVKPVTI (185 aa)). Residue 225-232 (AFTGSGKT) participates in ATP binding. Positions 344-347 (DEAD) match the DEAD box motif. The region spanning 407–567 (DVIQEVEYVK…KVPPVLQVLH (161 aa)) is the Helicase C-terminal domain. The residue at position 414 (tyrosine 414) is a Phosphotyrosine; by BTK. Glycyl lysine isopeptide (Lys-Gly) (interchain with G-Cter in SUMO2) cross-links involve residues lysine 416 and lysine 442. A CCHC-type zinc finger spans residues 580–597 (RGCAFCGGLGHRITDCPK).

This sequence belongs to the DEAD box helicase family. DDX41 subfamily. In terms of assembly, identified in the spliceosome C complex. Interacts with ERCC6. Interacts with FAM50A. Interacts with STING1. Interacts with CGAS. Interacts with several spliceosomes components such as PRP19 or CDC5L. Acetylation at Lys-9 regulates the nuclear/cytoplasmic localization. Post-translationally, phosphorylated by BTK; phosphorylation induces binding to dsDNA and STING1. In terms of processing, 'Lys-48'-linked ubiquitinated and degraded by TRIM21 leading to negative regulation of the innate immune response to intracellular dsDNA.

The protein resides in the nucleus. The protein localises to the cytoplasm. The enzyme catalyses ATP + H2O = ADP + phosphate + H(+). Functionally, multifunctional protein that participates in many aspects of cellular RNA metabolism. Plays pivotal roles in innate immune sensing and hematopoietic homeostasis. Recognizes foreign or self-nucleic acids generated during microbial infection, thereby initiating anti-pathogen responses. Mechanistically, phosphorylation by BTK allows binding to dsDNA leading to interaction with STING1. Modulates the homeostasis of dsDNA through its ATP-dependent DNA-unwinding activity and ATP-independent strand-annealing activity. In turn, induces STING1-mediated type I interferon and cytokine responses to DNA and DNA viruses. Selectively modulates the transcription of certain immunity-associated genes by regulating their alternative splicing. Binds to RNA (R)-loops, structures consisting of DNA/RNA hybrids and a displaced strand of DNA that occur during transcription, and prevents their accumulation, thereby maintaining genome stability. Also participates in pre-mRNA splicing, translational regulation and snoRNA processing, which is essential for ribosome biogenesis. The polypeptide is Probable ATP-dependent RNA helicase DDX41 (DDX41) (Homo sapiens (Human)).